We begin with the raw amino-acid sequence, 126 residues long: Aspartate 1-decarboxylase (126 aa).

The active-site Schiff-base intermediate with substrate; via pyruvic acid is the Ser25. At Ser25 the chain carries Pyruvic acid (Ser). Position 57 (Thr57) interacts with substrate. Tyr58 functions as the Proton donor in the catalytic mechanism. 73–75 (GAA) contacts substrate.

Belongs to the PanD family. Heterooctamer of four alpha and four beta subunits. Pyruvate serves as cofactor. Is synthesized initially as an inactive proenzyme, which is activated by self-cleavage at a specific serine bond to produce a beta-subunit with a hydroxyl group at its C-terminus and an alpha-subunit with a pyruvoyl group at its N-terminus.

It localises to the cytoplasm. It carries out the reaction L-aspartate + H(+) = beta-alanine + CO2. It functions in the pathway cofactor biosynthesis; (R)-pantothenate biosynthesis; beta-alanine from L-aspartate: step 1/1. Functionally, catalyzes the pyruvoyl-dependent decarboxylation of aspartate to produce beta-alanine. The protein is Aspartate 1-decarboxylase of Proteus mirabilis (strain HI4320).